A 120-amino-acid chain; its full sequence is Aspartate 1-decarboxylase (120 aa).

The active-site Schiff-base intermediate with substrate; via pyruvic acid is the S25. Pyruvic acid (Ser) is present on S25. T57 serves as a coordination point for substrate. Y58 serves as the catalytic Proton donor. 73–75 (GAA) provides a ligand contact to substrate.

It belongs to the PanD family. As to quaternary structure, heterooctamer of four alpha and four beta subunits. It depends on pyruvate as a cofactor. Is synthesized initially as an inactive proenzyme, which is activated by self-cleavage at a specific serine bond to produce a beta-subunit with a hydroxyl group at its C-terminus and an alpha-subunit with a pyruvoyl group at its N-terminus.

The protein localises to the cytoplasm. The catalysed reaction is L-aspartate + H(+) = beta-alanine + CO2. It participates in cofactor biosynthesis; (R)-pantothenate biosynthesis; beta-alanine from L-aspartate: step 1/1. Catalyzes the pyruvoyl-dependent decarboxylation of aspartate to produce beta-alanine. In Deinococcus radiodurans (strain ATCC 13939 / DSM 20539 / JCM 16871 / CCUG 27074 / LMG 4051 / NBRC 15346 / NCIMB 9279 / VKM B-1422 / R1), this protein is Aspartate 1-decarboxylase.